The following is a 487-amino-acid chain: Glutamyl-tRNA(Gln) amidotransferase subunit A (487 aa).

Residues K79 and S158 each act as charge relay system in the active site. S182 (acyl-ester intermediate) is an active-site residue.

It belongs to the amidase family. GatA subfamily. In terms of assembly, heterotrimer of A, B and C subunits.

The catalysed reaction is L-glutamyl-tRNA(Gln) + L-glutamine + ATP + H2O = L-glutaminyl-tRNA(Gln) + L-glutamate + ADP + phosphate + H(+). Functionally, allows the formation of correctly charged Gln-tRNA(Gln) through the transamidation of misacylated Glu-tRNA(Gln) in organisms which lack glutaminyl-tRNA synthetase. The reaction takes place in the presence of glutamine and ATP through an activated gamma-phospho-Glu-tRNA(Gln). The polypeptide is Glutamyl-tRNA(Gln) amidotransferase subunit A (Ehrlichia ruminantium (strain Welgevonden)).